Consider the following 279-residue polypeptide: tRNA (guanine-N(1)-)-methyltransferase (279 aa).

Residues Gly132 and Ile152–Leu157 contribute to the S-adenosyl-L-methionine site.

The protein belongs to the RNA methyltransferase TrmD family. Homodimer.

It is found in the cytoplasm. The catalysed reaction is guanosine(37) in tRNA + S-adenosyl-L-methionine = N(1)-methylguanosine(37) in tRNA + S-adenosyl-L-homocysteine + H(+). Specifically methylates guanosine-37 in various tRNAs. The protein is tRNA (guanine-N(1)-)-methyltransferase of Saccharophagus degradans (strain 2-40 / ATCC 43961 / DSM 17024).